A 211-amino-acid polypeptide reads, in one-letter code: Stromal cell-derived factor 2 (211 aa).

Residues 1 to 18 (MAVVSLLLFGGLWSAVGS) form the signal peptide. 3 consecutive MIR domains span residues 21–75 (LAVV…IRGK), 83–138 (GTPI…VLCN), and 139–193 (GPYW…AMEG).

It is found in the secreted. The protein is Stromal cell-derived factor 2 (SDF2) of Bos taurus (Bovine).